We begin with the raw amino-acid sequence, 318 residues long: Cobalamin biosynthesis protein CobD (318 aa).

5 consecutive transmembrane segments (helical) span residues Val-56–Met-76, Glu-78–Gly-98, Val-153–Ala-173, Leu-204–Ile-224, and Met-298–Ile-318.

It belongs to the CobD/CbiB family.

It localises to the cell membrane. The protein operates within cofactor biosynthesis; adenosylcobalamin biosynthesis. Functionally, converts cobyric acid to cobinamide by the addition of aminopropanol on the F carboxylic group. The sequence is that of Cobalamin biosynthesis protein CobD from Yersinia enterocolitica serotype O:8 / biotype 1B (strain NCTC 13174 / 8081).